Consider the following 267-residue polypeptide: Chlorophyll a-b binding protein 3B, chloroplastic (267 aa).

A chloroplast-targeting transit peptide spans 1-34 (MAASTMALSSSTFAGKAVKLSPSSSEISGNGRIT). Positions 19–52 (KLSPSSSEISGNGRITMRKTAAKPKPASSGSPWX) are disordered. Residues 153-173 (LVHAQSILAIWACQVVLMGAV) traverse the membrane as a helical segment. Residues Val154, Ser158, Gln166, Glu174, Arg177, and Leu183 each contribute to the chlorophyll b site. Lys214, Glu215, Asn218, Arg220, Gln232, His247, and Ala256 together coordinate chlorophyll a. A helical transmembrane segment spans residues 221 to 241 (LAMFSMFGFFVQAIVTGKGPL). Phe263 contributes to the chlorophyll b binding site.

The protein belongs to the light-harvesting chlorophyll a/b-binding (LHC) protein family. The LHC complex consists of chlorophyll a-b binding proteins. Binds at least 14 chlorophylls (8 Chl-a and 6 Chl-b) and carotenoids such as lutein and neoxanthin. serves as cofactor. Photoregulated by reversible phosphorylation of its threonine residues.

It localises to the plastid. The protein localises to the chloroplast thylakoid membrane. In terms of biological role, the light-harvesting complex (LHC) functions as a light receptor, it captures and delivers excitation energy to photosystems with which it is closely associated. This chain is Chlorophyll a-b binding protein 3B, chloroplastic (CAB3B), found in Solanum lycopersicum (Tomato).